A 160-amino-acid chain; its full sequence is Protein max (160 aa).

Residues 1-13 (MSDNDDIEVESDE) are compositionally biased toward acidic residues. The segment at 1–40 (MSDNDDIEVESDEEQPRFQSAADKRAHHNALERKRRDHIK) is disordered. Position 2 is an N-acetylserine (S2). 2 positions are modified to phosphoserine: S2 and S11. The region spanning 23–74 (DKRAHHNALERKRRDHIKDSFHSLRDSVPSLQGEKASRAQILDKATEYIQYM) is the bHLH domain. Basic and acidic residues predominate over residues 29–40 (NALERKRRDHIK). An N6-acetyllysine modification is found at K66. Residues 81–102 (HQQDIDDLKRQNALLEQQVRAL) form a leucine-zipper region. A disordered region spans residues 104-160 (KARSSAQLQTNYPSSDNSLYTNAKGGTISAFDGGSDSSSESEPEEPQSRKKLRMEAS). S107 is subject to Phosphoserine. Residues 107-124 (SSAQLQTNYPSSDNSLYT) are compositionally biased toward polar residues. N6-acetyllysine occurs at positions 153 and 154.

It belongs to the MAX family. In terms of assembly, efficient DNA binding requires dimerization with another bHLH protein. Binds DNA as a heterodimer with MYC or MAD. Part of the E2F6.com-1 complex in G0 phase composed of E2F6, MGA, MAX, TFDP1, CBX3, BAT8, EUHMTASE1, RING1, RNF2, MBLR, L3MBTL2 and YAF2. Component of some MLL1/MLL complex, at least composed of the core components KMT2A/MLL1, ASH2L, HCFC1/HCF1, WDR5 and RBBP5, as well as the facultative components BACC1, CHD8, E2F6, HSP70, INO80C, KANSL1, LAS1L, MAX, MCRS1, MGA, MYST1/MOF, PELP1, PHF20, PRP31, RING2, RUVB1/TIP49A, RUVB2/TIP49B, SENP3, TAF1, TAF4, TAF6, TAF7, TAF9 and TEX10. Interacts with SPAG9. The heterodimer MYC:MAX interacts with ABI1; the interaction may enhance MYC:MAX transcriptional activity. Post-translationally, phosphorylated.

Its subcellular location is the nucleus. The protein resides in the cell projection. The protein localises to the dendrite. Functionally, transcription regulator. Forms a sequence-specific DNA-binding protein complex with MYC or MAD which recognizes the core sequence 5'-CAC[GA]TG-3'. The MYC:MAX complex is a transcriptional activator, whereas the MAD:MAX complex is a repressor. CpG methylation of the recognition site greatly inhibits DNA binding, suggesting that DNA methylation may regulate the MYC:MAX complex in vivo. May repress transcription via the recruitment of a chromatin remodeling complex containing H3 'Lys-9' histone methyltransferase activity. Represses MYC transcriptional activity from E-box elements. The protein is Protein max of Mus musculus (Mouse).